Here is a 182-residue protein sequence, read N- to C-terminus: Organic solute transporter subunit beta (182 aa).

Positions 1–20 (MSGLLKYLFGCFILCLLLQG) are cleaved as a signal peptide. Residues 21-64 (KTHMTSATISKPHETIDIEKQNMTGERNSTLAQQLSFPMEDPTN) are Extracellular-facing. Residues Asn-42 and Asn-48 are each glycosylated (N-linked (GlcNAc...) asparagine). The chain crosses the membrane as a helical span at residues 65–85 (WNYAILALAFVVLFLAFLILA). The Cytoplasmic segment spans residues 86–182 (QNSRANRTRK…LYTDSKEDDV (97 aa)).

The protein belongs to the OST-beta family. As to quaternary structure, interacts with slc51a. The Ost-alpha/Ost-beta complex is a heterodimer composed of alpha (slc51a) and beta (slc51b) subunit; may induce the transport of slc51a from the endoplasmic reticulum to the plasma membrane. Expressed in liver.

It localises to the cell membrane. Functionally, essential component of the Ost-alpha/Ost-beta complex, a heterodimer that acts as the intestinal basolateral transporter responsible for bile acid export from enterocytes into portal blood. Efficiently transports the major species of bile acids. May modulate slc51a glycosylation, membrane trafficking and stability activities. Able to transport taurocholate, estrone sulfate, digoxin, and prostaglandin E(2), but not p-aminohippurate or S-dinitrophenyl glutathione. In Leucoraja erinaceus (Little skate), this protein is Organic solute transporter subunit beta (slc51b).